A 77-amino-acid polypeptide reads, in one-letter code: Acyl carrier protein (77 aa).

A Carrier domain is found at 1–76 (MSLEDDVKSI…DVITYIKTRQ (76 aa)). O-(pantetheine 4'-phosphoryl)serine is present on serine 36.

Belongs to the acyl carrier protein (ACP) family. 4'-phosphopantetheine is transferred from CoA to a specific serine of apo-ACP by AcpS. This modification is essential for activity because fatty acids are bound in thioester linkage to the sulfhydryl of the prosthetic group.

It is found in the cytoplasm. It participates in lipid metabolism; fatty acid biosynthesis. Its function is as follows. Carrier of the growing fatty acid chain in fatty acid biosynthesis. The sequence is that of Acyl carrier protein from Chlamydia caviae (strain ATCC VR-813 / DSM 19441 / 03DC25 / GPIC) (Chlamydophila caviae).